The sequence spans 193 residues: Xanthine phosphoribosyltransferase (193 aa).

Leu20 and Asn27 together coordinate xanthine. Ala129–Ala133 lines the 5-phospho-alpha-D-ribose 1-diphosphate pocket. Position 157 (Lys157) interacts with xanthine.

The protein belongs to the purine/pyrimidine phosphoribosyltransferase family. Xpt subfamily. In terms of assembly, homodimer.

Its subcellular location is the cytoplasm. It catalyses the reaction XMP + diphosphate = xanthine + 5-phospho-alpha-D-ribose 1-diphosphate. The protein operates within purine metabolism; XMP biosynthesis via salvage pathway; XMP from xanthine: step 1/1. Functionally, converts the preformed base xanthine, a product of nucleic acid breakdown, to xanthosine 5'-monophosphate (XMP), so it can be reused for RNA or DNA synthesis. This is Xanthine phosphoribosyltransferase from Bifidobacterium longum (strain NCC 2705).